The chain runs to 267 residues: Ubiquinone biosynthesis protein COQ4 homolog, mitochondrial (267 aa).

Zn(2+) is bound by residues histidine 170, aspartate 171, histidine 174, and glutamate 186.

The protein belongs to the COQ4 family. As to quaternary structure, component of a multi-subunit COQ enzyme complex. Zn(2+) serves as cofactor.

Its subcellular location is the mitochondrion inner membrane. The enzyme catalyses a 4-hydroxy-3-methoxy-5-(all-trans-polyprenyl)benzoate + H(+) = a 2-methoxy-6-(all-trans-polyprenyl)phenol + CO2. It functions in the pathway cofactor biosynthesis; ubiquinone biosynthesis. In terms of biological role, lyase that catalyzes the C1-decarboxylation of 4-hydroxy-3-methoxy-5-(all-trans-polyprenyl)benzoic acid into 2-methoxy-6-(all-trans-polyprenyl)phenol during ubiquinone biosynthesis. In Drosophila pseudoobscura pseudoobscura (Fruit fly), this protein is Ubiquinone biosynthesis protein COQ4 homolog, mitochondrial.